We begin with the raw amino-acid sequence, 132 residues long: Amicyanin (132 aa).

A signal peptide spans 1–26 (MISAKTLRPAIAAIALFAIGATGAWA). Q27 is modified (pyrrolidone carboxylic acid). In terms of domain architecture, Plastocyanin-like spans 27–132 (QDKITVTSEK…PFMRGKVIVE (106 aa)). Cu cation is bound by residues H80, C119, H122, and M125.

Cu cation serves as cofactor.

Its subcellular location is the periplasm. It functions in the pathway one-carbon metabolism; methylamine degradation. Primary acceptor of electrons from methylamine dehydrogenase. Passes those electrons on either a soluble cytochrome c or to pseudoazurin. In Paracoccus versutus (Thiobacillus versutus), this protein is Amicyanin (mauC).